The sequence spans 498 residues: L-xylulose/3-keto-L-gulonate kinase (498 aa).

This sequence belongs to the FGGY kinase family. In terms of assembly, homodimer.

The enzyme catalyses L-xylulose + ATP = L-xylulose 5-phosphate + ADP + H(+). It catalyses the reaction 3-dehydro-L-gulonate + ATP = 3-dehydro-L-gulonate 6-phosphate + ADP + H(+). Catalyzes the phosphorylation of L-xylulose and 3-keto-L-gulonate. Is involved in L-lyxose utilization via xylulose, and may also be involved in the utilization of 2,3-diketo-L-gulonate. This Escherichia coli (strain K12) protein is L-xylulose/3-keto-L-gulonate kinase (lyx).